We begin with the raw amino-acid sequence, 279 residues long: Protoheme IX farnesyltransferase (279 aa).

9 helical membrane passes run Leu5–Leu25, Ile33–Phe53, Leu84–Gly103, Leu108–Leu125, Ile133–Gly153, Ala159–Tyr179, Ala201–Tyr221, Leu222–Ile242, and Ala256–Ile276.

This sequence belongs to the UbiA prenyltransferase family. Protoheme IX farnesyltransferase subfamily.

Its subcellular location is the cell membrane. It carries out the reaction heme b + (2E,6E)-farnesyl diphosphate + H2O = Fe(II)-heme o + diphosphate. It participates in porphyrin-containing compound metabolism; heme O biosynthesis; heme O from protoheme: step 1/1. Converts heme B (protoheme IX) to heme O by substitution of the vinyl group on carbon 2 of heme B porphyrin ring with a hydroxyethyl farnesyl side group. The chain is Protoheme IX farnesyltransferase from Pyrobaculum arsenaticum (strain DSM 13514 / JCM 11321 / PZ6).